The sequence spans 529 residues: uncharacterized protein (529 aa).

An N-terminal signal peptide occupies residues 1-20 (MYFLILILVLLLIMVAAATA).

This is an uncharacterized protein from Orgyia pseudotsugata multicapsid polyhedrosis virus (OpMNPV).